The chain runs to 365 residues: Putative F-box/kelch-repeat protein At3g16880 (365 aa).

Positions 1 to 47 constitute an F-box domain; it reads MTKMSKLPNDLLEEILSRSPLYSMRAIRLTCKKWNTLAKEESFTKKQ. Kelch repeat units follow at residues 98-149 and 155-205; these read RVYH…TKKS and ILSS…VKGN.

This is Putative F-box/kelch-repeat protein At3g16880 from Arabidopsis thaliana (Mouse-ear cress).